Consider the following 288-residue polypeptide: ATP synthase gamma chain (288 aa).

Belongs to the ATPase gamma chain family. As to quaternary structure, F-type ATPases have 2 components, CF(1) - the catalytic core - and CF(0) - the membrane proton channel. CF(1) has five subunits: alpha(3), beta(3), gamma(1), delta(1), epsilon(1). CF(0) has three main subunits: a, b and c.

Its subcellular location is the cell inner membrane. Its function is as follows. Produces ATP from ADP in the presence of a proton gradient across the membrane. The gamma chain is believed to be important in regulating ATPase activity and the flow of protons through the CF(0) complex. This Rickettsia bellii (strain RML369-C) protein is ATP synthase gamma chain.